A 312-amino-acid polypeptide reads, in one-letter code: tRNA uridine(34) hydroxylase (312 aa).

The Rhodanese domain maps to 130–225 (RGDEVVFFDG…YGEQFGNKGL (96 aa)). The active-site Cysteine persulfide intermediate is cysteine 185.

The protein belongs to the TrhO family.

It catalyses the reaction uridine(34) in tRNA + AH2 + O2 = 5-hydroxyuridine(34) in tRNA + A + H2O. Its function is as follows. Catalyzes oxygen-dependent 5-hydroxyuridine (ho5U) modification at position 34 in tRNAs. The protein is tRNA uridine(34) hydroxylase of Corynebacterium glutamicum (strain ATCC 13032 / DSM 20300 / JCM 1318 / BCRC 11384 / CCUG 27702 / LMG 3730 / NBRC 12168 / NCIMB 10025 / NRRL B-2784 / 534).